We begin with the raw amino-acid sequence, 338 residues long: Glyceraldehyde-3-phosphate dehydrogenase 2 (338 aa).

NAD(+) contacts are provided by residues 11 to 12, Asp-33, and Arg-78; that span reads RI. D-glyceraldehyde 3-phosphate contacts are provided by residues 149–151, Thr-180, 209–210, and Arg-232; these read SCT and TG. The active-site Nucleophile is the Cys-150. Asn-314 is a binding site for NAD(+).

The protein belongs to the glyceraldehyde-3-phosphate dehydrogenase family. In terms of assembly, homotetramer.

The protein resides in the cytoplasm. It catalyses the reaction D-glyceraldehyde 3-phosphate + phosphate + NAD(+) = (2R)-3-phospho-glyceroyl phosphate + NADH + H(+). It participates in carbohydrate degradation; glycolysis; pyruvate from D-glyceraldehyde 3-phosphate: step 1/5. The sequence is that of Glyceraldehyde-3-phosphate dehydrogenase 2 (gpd2) from Agaricus bisporus (White button mushroom).